The chain runs to 74 residues: uncharacterized protein (74 aa).

This is an uncharacterized protein from Avena sativa (Oat).